A 745-amino-acid polypeptide reads, in one-letter code: Cysteine protease atg4 (745 aa).

3 stretches are compositionally biased toward low complexity: residues 29 to 42 (QQSY…APQQ), 52 to 64 (SPTS…SSST), and 194 to 215 (NNNS…NNNN). 2 disordered regions span residues 29 to 68 (QQSY…AMGN) and 192 to 215 (FQNN…NNNN). Cys-262 serves as the catalytic Nucleophile. 2 disordered regions span residues 344 to 363 (LNRG…KEEE) and 439 to 480 (QNNN…NGYN). Positions 439–477 (QNNNKNNNNNNPTTTTTTTTTATSSNNNNNQSPPSRVPN) are enriched in low complexity. Residues Asp-562 and His-564 contribute to the active site. The tract at residues 686–745 (HIPYNPNNNQNNNQNNNNNNNKNNNNNTNQQQTPNYPPKLNTYQPDFSSDGEIDDFTMVG) is disordered. Residues 688–719 (PYNPNNNQNNNQNNNNNNNKNNNNNTNQQQTP) are compositionally biased toward low complexity. The span at 734-745 (SDGEIDDFTMVG) shows a compositional bias: acidic residues.

Belongs to the peptidase C54 family.

The protein resides in the cytoplasm. It carries out the reaction [protein]-C-terminal L-amino acid-glycyl-phosphatidylethanolamide + H2O = [protein]-C-terminal L-amino acid-glycine + a 1,2-diacyl-sn-glycero-3-phosphoethanolamine. Cysteine protease that plays a key role in autophagy by mediating both proteolytic activation and delipidation of ATG8 family proteins. The protease activity is required for proteolytic activation of ATG8 family proteins: cleaves the C-terminal amino acid of ATG8 proteins to reveal a C-terminal glycine. Exposure of the glycine at the C-terminus is essential for ATG8 proteins conjugation to phosphatidylethanolamine (PE) and insertion to membranes, which is necessary for autophagy. In addition to the protease activity, also mediates delipidation of PE-conjugated ATG8 proteins. The sequence is that of Cysteine protease atg4 (atg4-1) from Dictyostelium discoideum (Social amoeba).